We begin with the raw amino-acid sequence, 232 residues long: Large ribosomal subunit protein uL1 (232 aa).

This sequence belongs to the universal ribosomal protein uL1 family. In terms of assembly, part of the 50S ribosomal subunit.

Its function is as follows. Binds directly to 23S rRNA. The L1 stalk is quite mobile in the ribosome, and is involved in E site tRNA release. Protein L1 is also a translational repressor protein, it controls the translation of the L11 operon by binding to its mRNA. The protein is Large ribosomal subunit protein uL1 of Roseobacter denitrificans (strain ATCC 33942 / OCh 114) (Erythrobacter sp. (strain OCh 114)).